We begin with the raw amino-acid sequence, 229 residues long: Acidic leucine-rich nuclear phosphoprotein 32-related protein 1 (229 aa).

LRR repeat units follow at residues 19–40 (TVDTLFLDNAEDGQIGGLTDQL), 42–63 (NLEMLSMVKCGLTTLAGFPTLP), 64–85 (ALTYLDISDNQLGDNASFDVLV), and 90–110 (DLKKITLASNKLSLDNLRCLK). One can recognise an LRRCT domain in the interval 124–164 (PSLGLLEDYREKMFEMIPSLKILDGCDVDGEEVEEEFAGEG). The span at 155–177 (EVEEEFAGEGGEDSEEGSGDEDG) shows a compositional bias: acidic residues. A disordered region spans residues 155-229 (EVEEEFAGEG…DNKKAAGDDE (75 aa)). The segment covering 219-229 (PDNKKAAGDDE) has biased composition (basic and acidic residues).

Belongs to the ANP32 family.

The chain is Acidic leucine-rich nuclear phosphoprotein 32-related protein 1 from Caenorhabditis elegans.